The sequence spans 187 residues: Large ribosomal subunit protein uL24c (187 aa).

Residues 1 to 41 constitute a chloroplast transit peptide; it reads MAALQSSFAGLSTSFFGQRFSPPLSLPPLVKSTEGPCLIQA.

This sequence belongs to the universal ribosomal protein uL24 family. In terms of assembly, part of the 50S ribosomal subunit.

The protein localises to the plastid. The protein resides in the chloroplast. Functionally, one of two assembly initiator proteins, it binds directly to the 5'-end of the 23S rRNA, where it nucleates assembly of the 50S subunit. In Nicotiana tabacum (Common tobacco), this protein is Large ribosomal subunit protein uL24c (RPL24).